A 540-amino-acid chain; its full sequence is Glucose-6-phosphate isomerase (540 aa).

Glu-350 (proton donor) is an active-site residue. Active-site residues include His-381 and Lys-503.

Belongs to the GPI family.

The protein resides in the cytoplasm. It carries out the reaction alpha-D-glucose 6-phosphate = beta-D-fructose 6-phosphate. Its pathway is carbohydrate biosynthesis; gluconeogenesis. It functions in the pathway carbohydrate degradation; glycolysis; D-glyceraldehyde 3-phosphate and glycerone phosphate from D-glucose: step 2/4. Catalyzes the reversible isomerization of glucose-6-phosphate to fructose-6-phosphate. This Burkholderia ambifaria (strain MC40-6) protein is Glucose-6-phosphate isomerase.